A 406-amino-acid chain; its full sequence is Exodeoxyribonuclease 7 large subunit (406 aa).

Belongs to the XseA family. Heterooligomer composed of large and small subunits.

The protein localises to the cytoplasm. It catalyses the reaction Exonucleolytic cleavage in either 5'- to 3'- or 3'- to 5'-direction to yield nucleoside 5'-phosphates.. Bidirectionally degrades single-stranded DNA into large acid-insoluble oligonucleotides, which are then degraded further into small acid-soluble oligonucleotides. The chain is Exodeoxyribonuclease 7 large subunit from Thermobifida fusca (strain YX).